Reading from the N-terminus, the 204-residue chain is Small ribosomal subunit protein uS4 (204 aa).

The tract at residues 20 to 46 (WGRPKSPINKREYGPGEHGQRRRKPSD) is disordered. A compositionally biased stretch (basic and acidic residues) spans 28-38 (NKREYGPGEHG). In terms of domain architecture, S4 RNA-binding spans 93–156 (TRLDAVVYRM…RQMPLILEAL (64 aa)).

Belongs to the universal ribosomal protein uS4 family. As to quaternary structure, part of the 30S ribosomal subunit. Contacts protein S5. The interaction surface between S4 and S5 is involved in control of translational fidelity.

In terms of biological role, one of the primary rRNA binding proteins, it binds directly to 16S rRNA where it nucleates assembly of the body of the 30S subunit. Its function is as follows. With S5 and S12 plays an important role in translational accuracy. This Rhodospirillum rubrum (strain ATCC 11170 / ATH 1.1.1 / DSM 467 / LMG 4362 / NCIMB 8255 / S1) protein is Small ribosomal subunit protein uS4.